A 169-amino-acid chain; its full sequence is Endoribonuclease YbeY (169 aa).

Zn(2+) is bound by residues histidine 135, histidine 139, and histidine 145.

Belongs to the endoribonuclease YbeY family. It depends on Zn(2+) as a cofactor.

The protein localises to the cytoplasm. Functionally, single strand-specific metallo-endoribonuclease involved in late-stage 70S ribosome quality control and in maturation of the 3' terminus of the 16S rRNA. The protein is Endoribonuclease YbeY of Lachnospira eligens (strain ATCC 27750 / DSM 3376 / VPI C15-48 / C15-B4) (Eubacterium eligens).